Consider the following 525-residue polypeptide: Glutamate--cysteine ligase (525 aa).

It belongs to the glutamate--cysteine ligase type 1 family. Type 1 subfamily.

It catalyses the reaction L-cysteine + L-glutamate + ATP = gamma-L-glutamyl-L-cysteine + ADP + phosphate + H(+). Its pathway is sulfur metabolism; glutathione biosynthesis; glutathione from L-cysteine and L-glutamate: step 1/2. The protein is Glutamate--cysteine ligase of Hahella chejuensis (strain KCTC 2396).